The primary structure comprises 146 residues: Putative pre-16S rRNA nuclease (146 aa).

This sequence belongs to the YqgF nuclease family.

Its subcellular location is the cytoplasm. Its function is as follows. Could be a nuclease involved in processing of the 5'-end of pre-16S rRNA. The polypeptide is Putative pre-16S rRNA nuclease (Methylobacillus flagellatus (strain ATCC 51484 / DSM 6875 / VKM B-1610 / KT)).